A 336-amino-acid polypeptide reads, in one-letter code: MAFLSSLLASLLLVGLLIQITGAQPIGVCYGKIANNLPSDQDVIKLYNSNNIKKMRIYFPETNVFNALKGSNIEIILDVPNQDLEALANPSKRQGWVQDNIRNHFPDVKFKYIAVGNEVDPGRDSGKYARFVGPAMENIYNALSSAGLQNQIKVSTATYLGLLTNTYPPRDSIFRDEYKSFINPIIGFLSRHNLPLLANIYPYFGHADDNVPLPYALFKQQGLNDAGYQNLFDALVDSMYFATEKLGGQNIEIIVSESGWPSEGHPSATLENAMTYYTNLINHVKGGAGTPKKPGRTIETYLFAMFDENRKDGKPSEQHFGLFKPDQRPKYQLKFD.

A signal peptide spans 1–23; that stretch reads MAFLSSLLASLLLVGLLIQITGA. Glutamine 24 carries the pyrrolidone carboxylic acid modification. Glutamate 118 (proton donor) is an active-site residue. Residue glutamate 257 is the Nucleophile of the active site.

It belongs to the glycosyl hydrolase 17 family.

It is found in the secreted. The protein localises to the extracellular space. It catalyses the reaction Hydrolysis of (1-&gt;3)-beta-D-glucosidic linkages in (1-&gt;3)-beta-D-glucans.. Its function is as follows. Implicated in the defense of plants against pathogens. The polypeptide is Glucan endo-1,3-beta-glucosidase A (Solanum lycopersicum (Tomato)).